A 352-amino-acid polypeptide reads, in one-letter code: D-alanine--D-alanine ligase (352 aa).

Positions 135 to 344 (KTVFAKAGLP…FPQLVDRLIE (210 aa)) constitute an ATP-grasp domain. An ATP-binding site is contributed by 171-226 (EETLNYPCFVKPANLGSSVGIAKVRSRSELEKALDQAASYDRRIIVEAGVIAREVE). Mg(2+)-binding residues include D297, E311, and N313.

It belongs to the D-alanine--D-alanine ligase family. It depends on Mg(2+) as a cofactor. The cofactor is Mn(2+).

The protein localises to the cytoplasm. It carries out the reaction 2 D-alanine + ATP = D-alanyl-D-alanine + ADP + phosphate + H(+). Its pathway is cell wall biogenesis; peptidoglycan biosynthesis. Its function is as follows. Cell wall formation. This chain is D-alanine--D-alanine ligase, found in Gloeothece citriformis (strain PCC 7424) (Cyanothece sp. (strain PCC 7424)).